Consider the following 1788-residue polypeptide: Laminin subunit beta-1 (1788 aa).

The signal sequence occupies residues 1–24 (MLELRLIVVIVLALLSWQWDPVDS). The tract at residues 23-43 (DSQRPPQHGRRDRPKYPPNKF) is disordered. A Laminin N-terminal domain is found at 50–287 (ERSSCYPATG…GISNMVVRGS (238 aa)). N-linked (GlcNAc...) asparagine glycans are attached at residues Asn-138, Asn-201, and Asn-232. Cystine bridges form between Cys-288-Cys-297, Cys-290-Cys-318, Cys-320-Cys-329, Cys-332-Cys-352, Cys-355-Cys-364, Cys-357-Cys-382, Cys-385-Cys-394, Cys-397-Cys-415, Cys-418-Cys-431, Cys-420-Cys-446, Cys-448-Cys-457, Cys-460-Cys-475, Cys-478-Cys-491, Cys-480-Cys-498, Cys-500-Cys-509, Cys-512-Cys-526, Cys-529-Cys-541, Cys-531-Cys-548, and Cys-550-Cys-559. 4 consecutive Laminin EGF-like domains span residues 288–354 (CSCY…ACKK), 355–417 (CECN…VCQP), 418–477 (CDCD…GCEP), and 478–528 (CTCN…GCSL). A glycan (N-linked (GlcNAc...) asparagine) is linked at Asn-487. One can recognise a Laminin EGF-like 5; truncated domain in the interval 529-559 (CNCDAGGSYDNYCDVISGQCRCRPHMTGRSC). Residues 567-783 (FIPLLPEVHE…LDNILSVFVH (217 aa)) enclose the Laminin IV type B domain. N-linked (GlcNAc...) asparagine glycosylation is present at Asn-591. Positions 641–643 (RGD) match the Cell attachment site motif. 32 disulfides stabilise this stretch: Cys-789–Cys-801, Cys-791–Cys-808, Cys-810–Cys-819, Cys-822–Cys-834, Cys-837–Cys-849, Cys-839–Cys-856, Cys-858–Cys-867, Cys-870–Cys-880, Cys-883–Cys-892, Cys-885–Cys-899, Cys-902–Cys-911, Cys-914–Cys-930, Cys-933–Cys-949, Cys-935–Cys-960, Cys-962–Cys-971, Cys-974–Cys-988, Cys-991–Cys-1005, Cys-993–Cys-1012, Cys-1015–Cys-1024, Cys-1027–Cys-1040, Cys-1043–Cys-1057, Cys-1045–Cys-1064, Cys-1066–Cys-1075, Cys-1078–Cys-1091, Cys-1094–Cys-1106, Cys-1096–Cys-1113, Cys-1115–Cys-1124, Cys-1127–Cys-1139, Cys-1142–Cys-1154, Cys-1144–Cys-1161, Cys-1163–Cys-1172, and Cys-1175–Cys-1186. Laminin EGF-like domains are found at residues 789–836 (CNCN…GCKA), 837–882 (CDCN…ECRV), 883–932 (CQCN…GCRP), 933–990 (CRCP…TCSK), 991–1042 (CECS…NCQQ), 1043–1093 (CECD…GCES), 1094–1141 (CNCD…KCQP), and 1142–1188 (CECD…HCSP). An N-linked (GlcNAc...) asparagine glycan is attached at Asn-1051. The segment at 1189–1405 (CGECFNNWDL…SQIPELNNQV (217 aa)) is domain II. 4 N-linked (GlcNAc...) asparagine glycosylation sites follow: Asn-1246, Asn-1301, Asn-1330, and Asn-1341. Positions 1255–1405 (EKLDYETQSL…SQIPELNNQV (151 aa)) form a coiled coil. The interval 1406–1432 (CGKPGDPCDSLCGGAGCGHCGGFLSCE) is domain alpha. The tract at residues 1433 to 1788 (HGAKTHSEEA…RGSHYRQCYT (356 aa)) is domain I. Positions 1453-1505 (ITSKKDQADQTIRALTQAKLNASEAYEKAKRGFEQSERYLNQTNANIKLAENL) form a coiled coil. Asn-1473, Asn-1493, and Asn-1515 each carry an N-linked (GlcNAc...) asparagine glycan. Residues 1540–1561 (EEIETLGDQINRAVSSLKNVEA) adopt a coiled-coil conformation. N-linked (GlcNAc...) asparagine glycosylation is found at Asn-1581, Asn-1644, and Asn-1703. Residues 1608–1762 (QGKAKDAIQQ…QQLLRLQAEI (155 aa)) adopt a coiled-coil conformation. Residues 1690-1719 (GEANNLQSATSATNQTLTDRASRSENARER) are disordered. Over residues 1693–1708 (NNLQSATSATNQTLTD) the composition is skewed to polar residues. Residues 1709 to 1719 (RASRSENARER) are compositionally biased toward basic and acidic residues.

In terms of assembly, laminin is a complex glycoprotein, consisting of three different polypeptide chains (alpha, beta, gamma), which are bound to each other by disulfide bonds into a cross-shaped molecule comprising one long and three short arms with globules at each end. Found in the basement membranes (major component).

It is found in the secreted. The protein localises to the extracellular space. Its subcellular location is the extracellular matrix. The protein resides in the basement membrane. Functionally, binding to cells via a high affinity receptor, laminin is thought to mediate the attachment, migration and organization of cells into tissues during embryonic development by interacting with other extracellular matrix components. Required for Ndg localization to the basement membrane. This chain is Laminin subunit beta-1 (LanB1), found in Drosophila melanogaster (Fruit fly).